Here is a 906-residue protein sequence, read N- to C-terminus: Probable RNA-directed DNA polymerase from transposon BS (906 aa).

Residues 482–758 form the Reverse transcriptase domain; sequence AILRVQFFPK…SQAKYLGITL (277 aa).

Requires Mg(2+) as cofactor. Mn(2+) serves as cofactor.

It carries out the reaction DNA(n) + a 2'-deoxyribonucleoside 5'-triphosphate = DNA(n+1) + diphosphate. In Drosophila melanogaster (Fruit fly), this protein is Probable RNA-directed DNA polymerase from transposon BS.